The primary structure comprises 295 residues: Alpha-soluble NSF attachment protein (295 aa).

Position 1 is an N-acetylmethionine (Met1). Phosphoserine occurs at positions 26, 29, and 195.

This sequence belongs to the SNAP family. As to quaternary structure, interacts with PRKCABP, and disrupts the interaction between GRIA2 and PRKCABP, leading to the internalization of GRIA2. Found in a complex with VAMP8. Component of a SNARE-like complex that contains at least ZW10, USE1L, RINT1, STX18 and NAPA/SNAP-alpha. Interacts with VTI1A. Interacts with STX12. Interacts with GNA12 (via N-terminus); the interaction promotes CDH5 localization to plasma membrane.

The protein resides in the cell membrane. Required for vesicular transport between the endoplasmic reticulum and the Golgi apparatus. Together with GNA12 promotes CDH5 localization to plasma membrane. In Mus musculus (Mouse), this protein is Alpha-soluble NSF attachment protein (Napa).